The primary structure comprises 856 residues: Protein phosphatase 2C 32 (856 aa).

Residues Ser-152, Ser-189, and Ser-201 each carry the phosphoserine modification. In terms of domain architecture, PPM-type phosphatase spans 269 to 835; the sequence is ESCLESNRNL…DDVSVMVVSL (567 aa). Residues Asp-307 and Gly-308 each contribute to the Mn(2+) site. Disordered regions lie at residues 340-373, 388-407, and 446-485; these read PSED…KSVV, GNTD…GPGK, and NPST…QISS. Over residues 395–407 the composition is skewed to low complexity; sequence ADGPPGDSAGPGK. A compositionally biased stretch (polar residues) spans 471–485; the sequence is NSGQRHGTKKSQISS. Residues Asp-763 and Asp-826 each contribute to the Mn(2+) site.

It belongs to the PP2C family. Mg(2+) is required as a cofactor. The cofactor is Mn(2+). As to expression, expressed in roots, leaves, stems, inflorescences, flowers and throughout the shoot meristem.

It is found in the nucleus. It carries out the reaction O-phospho-L-seryl-[protein] + H2O = L-seryl-[protein] + phosphate. The enzyme catalyses O-phospho-L-threonyl-[protein] + H2O = L-threonyl-[protein] + phosphate. Its activity is regulated as follows. Insensitive to okadaic acid. Functionally, involved in the regulation of pedicel length and of CLAVATA pathways controlling stem cell identity at shoot and flower meristems. This is Protein phosphatase 2C 32 (POL) from Arabidopsis thaliana (Mouse-ear cress).